The sequence spans 88 residues: Small ribosomal subunit protein bS20 (88 aa).

The protein belongs to the bacterial ribosomal protein bS20 family.

Functionally, binds directly to 16S ribosomal RNA. The chain is Small ribosomal subunit protein bS20 from Syntrophomonas wolfei subsp. wolfei (strain DSM 2245B / Goettingen).